Reading from the N-terminus, the 446-residue chain is Indoleacetamide hydrolase (446 aa).

Active-site charge relay system residues include K71 and S146. The active-site Acyl-ester intermediate is the S170.

The protein belongs to the amidase family.

It functions in the pathway plant hormone metabolism; auxin biosynthesis. In terms of biological role, hydrolyzes indole-3-acetamide (IAM) into indole-3-acetic acid (IAA). The sequence is that of Indoleacetamide hydrolase (iaaH) from Pseudomonas syringae pv. syringae.